Reading from the N-terminus, the 1448-residue chain is ABC transporter G family member 9 (1448 aa).

Polar residues predominate over residues 16–28; the sequence is EGGSNLNINTPSG. The segment at 16-41 is disordered; the sequence is EGGSNLNINTPSGMSDGDFNSGANSP. The ABC transporter 1 domain maps to 136 to 385; it reads LFKPSTWKIE…FLDLGFDCEP (250 aa). The region spanning 490-717 is the ABC transmembrane type-2 1 domain; it reads WGDKFSLVSR…APYDNSVRVC (228 aa). A run of 7 helical transmembrane segments spans residues 494 to 514, 530 to 550, 579 to 599, 604 to 624, 634 to 654, 663 to 683, and 748 to 768; these read FSLVSRYLSVIIQSFVYGSVF, AIFAAILFNAFLSEGELFATF, IPLTTVQVFLFSIVVYFMFGL, GKFFIFCFTLIGATLATTNMF, LYVSQNVMTGILIFMISYCGY, PWFGWFFWANPFTYAFKALMA, and LNIFITYLWWVLFIIINMVAV. Residues 822–1066 form the ABC transporter 2 domain; that stretch reads FTWENIKYTV…LTSYFERQGV (245 aa). 858–865 is an ATP binding site; the sequence is GSSGAGKT. 6 helical membrane passes run 1157–1177, 1191–1211, 1233–1253, 1272–1292, 1299–1319, and 1422–1442; these read FYAYGSILQAVMTGIIVGFTF, IFFIFQALLLGILLIFVVMVQ, FAISIVLVEIPYTIVCGSVFF, FYFWIIFIIYLFFCVSFGGAI, MFLAMTLVPLLIVFLFLFCGV, and IAILIAFWMFNIFLVVSFVYL. Positions 1157–1389 constitute an ABC transmembrane type-2 2 domain; that stretch reads FYAYGSILQA…VPATGYVTNT (233 aa).

This sequence belongs to the ABC transporter superfamily. ABCG family. PDR (TC 3.A.1.205) subfamily.

It localises to the membrane. The chain is ABC transporter G family member 9 (abcG9) from Dictyostelium discoideum (Social amoeba).